Consider the following 166-residue polypeptide: Interferon gamma (166 aa).

A signal peptide spans 1–23; that stretch reads MNYTSYILAFQLCVILGSSGCYC. A Pyrrolidone carboxylic acid modification is found at Gln-24. 2 N-linked (GlcNAc...) asparagine glycosylation sites follow: Asn-39 and Asn-106.

Belongs to the type II (or gamma) interferon family. Homodimer. Interacts with IFNGR1 (via extracellular domain); this interaction promotes IFNGR1 dimerization. As to expression, released primarily from activated T lymphocytes.

The protein localises to the secreted. Functionally, type II interferon produced by immune cells such as T-cells and NK cells that plays crucial roles in antimicrobial, antiviral, and antitumor responses by activating effector immune cells and enhancing antigen presentation. Primarily signals through the JAK-STAT pathway after interaction with its receptor IFNGR1 to affect gene regulation. Upon IFNG binding, IFNGR1 intracellular domain opens out to allow association of downstream signaling components JAK2, JAK1 and STAT1, leading to STAT1 activation, nuclear translocation and transcription of IFNG-regulated genes. Many of the induced genes are transcription factors such as IRF1 that are able to further drive regulation of a next wave of transcription. Plays a role in class I antigen presentation pathway by inducing a replacement of catalytic proteasome subunits with immunoproteasome subunits. In turn, increases the quantity, quality, and repertoire of peptides for class I MHC loading. Increases the efficiency of peptide generation also by inducing the expression of activator PA28 that associates with the proteasome and alters its proteolytic cleavage preference. Up-regulates as well MHC II complexes on the cell surface by promoting expression of several key molecules such as cathepsins B/CTSB, H/CTSH, and L/CTSL. Participates in the regulation of hematopoietic stem cells during development and under homeostatic conditions by affecting their development, quiescence, and differentiation. The sequence is that of Interferon gamma (IFNG) from Camelus bactrianus (Bactrian camel).